Consider the following 212-residue polypeptide: MILVGIDEAGRGSLIGPMVVAGVAIDSNFLKFLSEIGVKDSKKLTRKKREYLFGVILEYSYAISLVKAYPEEIDSENLNEITYRAMIQIIHSMSVYNPSIVTVDKVGNASAVEREIININSSPRVENNADVKYVEVSAASIIAKVVRDNIINELKKTYGDFGSGYPGDKKTVEWIKDLYSRQPTYALPIIRRSWKILQDIAPNYYIRKRDGN.

The RNase H type-2 domain occupies 1–206; sequence MILVGIDEAG…LQDIAPNYYI (206 aa). Residues Asp7, Glu8, and Asp104 each contribute to the a divalent metal cation site.

This sequence belongs to the RNase HII family. Requires Mn(2+) as cofactor. The cofactor is Mg(2+).

The protein resides in the cytoplasm. It catalyses the reaction Endonucleolytic cleavage to 5'-phosphomonoester.. Functionally, endonuclease that specifically degrades the RNA of RNA-DNA hybrids. This chain is Ribonuclease HII, found in Sulfolobus acidocaldarius (strain ATCC 33909 / DSM 639 / JCM 8929 / NBRC 15157 / NCIMB 11770).